The following is a 368-amino-acid chain: Cyclic GMP-AMP synthase-like receptor (368 aa).

ATP contacts are provided by residues Ser-60 and 72–74; that span reads EYD. Glu-72, Asp-74, and Asp-190 together coordinate Mg(2+). Residues Asp-190 and 229–236 contribute to the GTP site; that span reads RASFYRQE. Residues 233 to 236, Lys-254, and 268 to 272 each bind ATP; these read YRQE and SYFIK.

The protein belongs to the mab-21 family. Mg(2+) serves as cofactor. Requires Mn(2+) as cofactor.

The catalysed reaction is GTP + ATP = 3',2'-cGAMP + 2 diphosphate. It catalyses the reaction GTP + ATP = pppA(2'-5')pG + diphosphate. It carries out the reaction pppA(2'-5')pG = 3',2'-cGAMP + diphosphate. With respect to regulation, the enzyme activity is specifically activated by double-stranded RNA (dsRNA). Nucleotidyltransferase that catalyzes the formation of cyclic GMP-AMP (3',2'-cGAMP) from ATP and GTP and plays a key role in innate immunity. Synthesizes 3',2'-cGAMP in a two-step reaction through production of the linear intermediate pppA(2'-5')pG. Acts as a key sensor of double-stranded RNA (dsRNA), the presence of dsRNA in the cytoplasm being a danger signal that triggers the immune responses. Directly binds dsRNA, activating the nucleotidyltransferase activity, leading to synthesis of 3',2'-cGAMP, a second messenger that binds to and activates Sting, thereby triggering the antiviral immune response via activation of the NF-kappa-B transcription factor Rel (Relish). The sequence is that of Cyclic GMP-AMP synthase-like receptor from Lucilia cuprina (Green bottle fly).